The following is a 494-amino-acid chain: Ribonuclease H (494 aa).

Disordered stretches follow at residues 79-148 (NRRR…APPP) and 205-231 (RSGLEKSDRGDGAASLSALSEPQVGLR). Polar residues-rich tracts occupy residues 84-100 (GSTSKKAQVKSSVNQLA) and 131-143 (PTTSRASGETRTS). The 217-residue stretch at 272–488 (SSVPQVVYVD…ADVLAVAGAR (217 aa)) folds into the RNase H type-1 domain. Residues aspartate 281, glutamate 325, aspartate 374, and aspartate 480 each contribute to the Mg(2+) site.

The protein belongs to the RNase H family. Monomer. Mg(2+) serves as cofactor.

It catalyses the reaction Endonucleolytic cleavage to 5'-phosphomonoester.. Endonuclease that specifically degrades the RNA of RNA-DNA hybrids. This is Ribonuclease H (RNH1) from Crithidia fasciculata.